Here is a 432-residue protein sequence, read N- to C-terminus: Glutamate-1-semialdehyde 2,1-aminomutase (432 aa).

Residue Lys272 is modified to N6-(pyridoxal phosphate)lysine.

It belongs to the class-III pyridoxal-phosphate-dependent aminotransferase family. HemL subfamily. In terms of assembly, homodimer. Pyridoxal 5'-phosphate is required as a cofactor.

The protein localises to the cytoplasm. The enzyme catalyses (S)-4-amino-5-oxopentanoate = 5-aminolevulinate. The protein operates within porphyrin-containing compound metabolism; protoporphyrin-IX biosynthesis; 5-aminolevulinate from L-glutamyl-tRNA(Glu): step 2/2. It participates in porphyrin-containing compound metabolism; chlorophyll biosynthesis. The polypeptide is Glutamate-1-semialdehyde 2,1-aminomutase (Trichormus variabilis (strain ATCC 29413 / PCC 7937) (Anabaena variabilis)).